We begin with the raw amino-acid sequence, 407 residues long: S-adenosylmethionine synthase (407 aa).

His15 provides a ligand contact to ATP. Asp17 lines the Mg(2+) pocket. Glu43 is a binding site for K(+). 2 residues coordinate L-methionine: Glu56 and Gln99. The interval 99–109 is flexible loop; sequence QSPDIARGVDT. Positions 112–131 are disordered; sequence ERRGGGTAPGGPGDELDRQG. Residues 179 to 181, 252 to 253, Asp261, 267 to 268, Ala284, and Lys288 contribute to the ATP site; these read DGK, RF, and RK. Asp261 is a binding site for L-methionine. Lys292 is a binding site for L-methionine.

Belongs to the AdoMet synthase family. As to quaternary structure, homotetramer; dimer of dimers. Mg(2+) serves as cofactor. It depends on K(+) as a cofactor.

It localises to the cytoplasm. It catalyses the reaction L-methionine + ATP + H2O = S-adenosyl-L-methionine + phosphate + diphosphate. Its pathway is amino-acid biosynthesis; S-adenosyl-L-methionine biosynthesis; S-adenosyl-L-methionine from L-methionine: step 1/1. Its function is as follows. Catalyzes the formation of S-adenosylmethionine (AdoMet) from methionine and ATP. The overall synthetic reaction is composed of two sequential steps, AdoMet formation and the subsequent tripolyphosphate hydrolysis which occurs prior to release of AdoMet from the enzyme. The sequence is that of S-adenosylmethionine synthase from Streptomyces fradiae (Streptomyces roseoflavus).